The primary structure comprises 469 residues: Tetratricopeptide repeat protein 38 (469 aa).

3 TPR repeats span residues 107–140 (REKL…HPTD), 179–212 (SYVK…ERTD), and 251–284 (CHVY…QCFA).

This sequence belongs to the TTC38 family.

This chain is Tetratricopeptide repeat protein 38 (ttc38), found in Xenopus laevis (African clawed frog).